A 414-amino-acid polypeptide reads, in one-letter code: 2-epi-5-epi-valiolone synthase (414 aa).

NAD(+)-binding positions include aspartate 70, 101–104 (ESAK), 134–138 (GVLTD), 158–159 (TT), lysine 171, lysine 180, and 198–201 (FLAT). Residue lysine 171 is part of the active site. Zn(2+)-binding residues include glutamate 213, histidine 284, and histidine 300.

It belongs to the sugar phosphate cyclases superfamily. EEVS family. NAD(+) serves as cofactor. Zn(2+) is required as a cofactor.

The enzyme catalyses D-sedoheptulose 7-phosphate = 2-epi-5-epi-valiolone + phosphate. It functions in the pathway antibiotic biosynthesis. Its function is as follows. Catalyzes the cyclization of D-sedoheptulose 7-phosphate to 2-epi-5-epi-valiolone. Involved in validamycin biosynthesis. In Streptomyces hygroscopicus subsp. jinggangensis (strain 5008), this protein is 2-epi-5-epi-valiolone synthase.